We begin with the raw amino-acid sequence, 480 residues long: Cytochrome b-c1 complex subunit 1, mitochondrial (480 aa).

Residues 1–34 (MAASAVCRAACSGTQALLRTCRSPALLRLPALRG) constitute a mitochondrion transit peptide. 2 positions are modified to N6-acetyllysine: K111 and K138. K163 carries the N6-acetyllysine; alternate modification. K163 is subject to N6-succinyllysine; alternate. A Phosphoserine modification is found at S212. T214 is modified (phosphothreonine).

Belongs to the peptidase M16 family. UQCRC1/QCR1 subfamily. As to quaternary structure, component of the ubiquinol-cytochrome c oxidoreductase (cytochrome b-c1 complex, complex III, CIII), a multisubunit enzyme composed of 11 subunits. The complex is composed of 3 respiratory subunits cytochrome b, cytochrome c1 and Rieske protein UQCRFS1, 2 core protein subunits UQCRC1/QCR1 and UQCRC2/QCR2, and 6 low-molecular weight protein subunits UQCRH/QCR6, UQCRB/QCR7, UQCRQ/QCR8, UQCR10/QCR9, UQCR11/QCR10 and subunit 9, the cleavage product of Rieske protein UQCRFS1. The complex exists as an obligatory dimer and forms supercomplexes (SCs) in the inner mitochondrial membrane with NADH-ubiquinone oxidoreductase (complex I, CI) and cytochrome c oxidase (complex IV, CIV), resulting in different assemblies (supercomplex SCI(1)III(2)IV(1) and megacomplex MCI(2)III(2)IV(2)). Interacts with UQCC6. Interacts with STMP1.

Its subcellular location is the mitochondrion inner membrane. In terms of biological role, component of the ubiquinol-cytochrome c oxidoreductase, a multisubunit transmembrane complex that is part of the mitochondrial electron transport chain which drives oxidative phosphorylation. The respiratory chain contains 3 multisubunit complexes succinate dehydrogenase (complex II, CII), ubiquinol-cytochrome c oxidoreductase (cytochrome b-c1 complex, complex III, CIII) and cytochrome c oxidase (complex IV, CIV), that cooperate to transfer electrons derived from NADH and succinate to molecular oxygen, creating an electrochemical gradient over the inner membrane that drives transmembrane transport and the ATP synthase. The cytochrome b-c1 complex catalyzes electron transfer from ubiquinol to cytochrome c, linking this redox reaction to translocation of protons across the mitochondrial inner membrane, with protons being carried across the membrane as hydrogens on the quinol. In the process called Q cycle, 2 protons are consumed from the matrix, 4 protons are released into the intermembrane space and 2 electrons are passed to cytochrome c. The 2 core subunits UQCRC1/QCR1 and UQCRC2/QCR2 are homologous to the 2 mitochondrial-processing peptidase (MPP) subunits beta-MPP and alpha-MPP respectively, and they seem to have preserved their MPP processing properties. May be involved in the in situ processing of UQCRFS1 into the mature Rieske protein and its mitochondrial targeting sequence (MTS)/subunit 9 when incorporated into complex III. Seems to play an important role in the maintenance of proper mitochondrial function in nigral dopaminergic neurons. The sequence is that of Cytochrome b-c1 complex subunit 1, mitochondrial (Uqcrc1) from Rattus norvegicus (Rat).